Reading from the N-terminus, the 972-residue chain is RNA polymerase-associated protein RapA (972 aa).

Residues 164-334 (EVGRRYAPRV…FARLRLLDPD (171 aa)) enclose the Helicase ATP-binding domain. 177–184 (DEVGLGKT) is a binding site for ATP. The short motif at 280–283 (DEAH) is the DEAH box element. A Helicase C-terminal domain is found at 493 to 671 (RVNWLLEMLK…HEPEALENLI (179 aa)).

The protein belongs to the SNF2/RAD54 helicase family. RapA subfamily. As to quaternary structure, interacts with the RNAP. Has a higher affinity for the core RNAP than for the holoenzyme. Its ATPase activity is stimulated by binding to RNAP.

Its function is as follows. Transcription regulator that activates transcription by stimulating RNA polymerase (RNAP) recycling in case of stress conditions such as supercoiled DNA or high salt concentrations. Probably acts by releasing the RNAP, when it is trapped or immobilized on tightly supercoiled DNA. Does not activate transcription on linear DNA. Probably not involved in DNA repair. This Photobacterium profundum (strain SS9) protein is RNA polymerase-associated protein RapA.